Consider the following 335-residue polypeptide: UPF0353 protein MAV335 (335 aa).

Helical transmembrane passes span 18-38 (WFFL…LMQL) and 67-87 (LPAI…AGPT). Positions 98–295 (VVMLVIDVSQ…QELKSVYATL (198 aa)) constitute a VWFA domain. The helical transmembrane segment at 309-329 (SVGWVRLGALVLRLAADALLI) threads the bilayer.

Belongs to the UPF0353 family.

Its subcellular location is the cell membrane. This chain is UPF0353 protein MAV335, found in Mycobacterium avium.